A 2860-amino-acid chain; its full sequence is Methylcytosine dioxygenase TET (2860 aa).

2 disordered regions span residues 51-255 (HYTT…PHLQ) and 457-562 (GQPH…DAVS). The span at 57-70 (HHPHSHSHPHHHYQ) shows a compositional bias: basic residues. Composition is skewed to low complexity over residues 71–181 (QHYP…AASG) and 191–231 (ANAN…SNGS). Over residues 468 to 482 (TPTSYDGNNSNNSYP) the composition is skewed to polar residues. Low complexity-rich tracts occupy residues 492–508 (HTPHTTTTQPTPTTTTP) and 536–546 (SLESSAESEAS). The CXXC-type zinc finger occupies 591-631 (SKKKRKRCGECVGCQRKDNCGECAPCRNDKSHQICKQRRCE). 8 residues coordinate Zn(2+): Cys598, Cys601, Cys604, Cys610, Cys613, Cys616, Cys625, and Cys630. Disordered regions lie at residues 641 to 734 (GADG…NLQQ), 771 to 810 (QHFQQQQQQHLQQQHAQQQHLPQQQHQITAQIQTMKDQPQ), 920 to 1113 (QVSA…EGYA), 1130 to 1155 (RKSDPKDPPPDLQQQPQQVQQQQQTG), 1170 to 1195 (LSANGPSSATPTHPLPNLQQQQQQVQ), 1209 to 1356 (AVGG…HSQY), and 1437 to 1460 (GYQHSTYGARGKPPANQPHQIHGH). The segment covering 692–706 (TKANKLNAAAASATS) has biased composition (low complexity). Residues 718–732 (LPQQSPNTTSATGNL) are compositionally biased toward polar residues. Low complexity-rich tracts occupy residues 771-804 (QHFQQQQQQHLQQQHAQQQHLPQQQHQITAQIQT), 930-942 (QQQQQQQQQQQQQ), and 985-1021 (ATNSNSNNNSSSNTSNTNNSNASNNNATTVVSGGTTT). Positions 1040 to 1054 (PNQAVPQSPTRSNML) are enriched in polar residues. The span at 1076-1085 (QQQQQQQQQQ) shows a compositional bias: low complexity. Polar residues predominate over residues 1086-1097 (HLSSPPMQDWNW). Positions 1141–1153 (LQQQPQQVQQQQQ) are enriched in low complexity. Low complexity-rich tracts occupy residues 1248–1263 (QDAQLQLQLQQHQPGQ) and 1299–1312 (SRAAAAAAAAAEAA). The segment covering 1337-1349 (PPHPHAAGGPPPG) has biased composition (pro residues). Cys1638, Cys1640, Cys1699, His1725, and Cys1727 together coordinate Zn(2+). Residues 1657-2666 (LGTASSLMDL…RMTLIFYQHR (1010 aa)) form an interaction with wds region. Arg1767 provides a ligand contact to 2-oxoglutarate. Positions 1777, 1779, 1795, 1804, and 1862 each coordinate Zn(2+). Cys1878 contributes to the 2-oxoglutarate binding site. His1884 is a Zn(2+) binding site. Fe cation is bound by residues His1886 and Asp1888. Asn1891 lines the substrate pocket. His1919 serves as a coordination point for 2-oxoglutarate. Disordered regions lie at residues 1966–2115 (PCRR…LMSS), 2198–2229 (LTPSTPTAQPQLGVPPATSIAGGTTTGAPTGA), 2263–2334 (SNLT…NLTE), 2350–2371 (APLTTSHHPQEGFVKPKPPPSD), 2422–2444 (MYPQQTPPPTPPPPSPNWNMYGH), and 2536–2598 (LPDL…NSTK). Residues 1979–1989 (EAAPPDGDQDA) show a composition bias toward acidic residues. Composition is skewed to low complexity over residues 1993–2015 (ANSQSSSSNGAQSQTQANNQQSS) and 2029–2059 (GNGVNANGASSKSKGKGKSNQSNNSSASTPG). The span at 2069–2086 (RCQTPVTNNPSPAGSAFS) shows a compositional bias: polar residues. A compositionally biased stretch (low complexity) spans 2212–2229 (PPATSIAGGTTTGAPTGA). Polar residues predominate over residues 2263-2275 (SNLTNPGGVTTEV). A compositionally biased stretch (low complexity) spans 2276 to 2285 (QQQHQQAQQQ). Positions 2290 to 2304 (GGVGPGGLPVVGGAP) are enriched in gly residues. Pro residues predominate over residues 2426-2437 (QTPPPTPPPPSP). The segment covering 2540-2562 (SNGQTNSDTVATPTPTGDSSSND) has biased composition (polar residues). Residues 2570-2594 (AGNQAPASGAGAATTAPPIASPGST) show a composition bias toward low complexity. His2642 provides a ligand contact to Fe cation. 2657–2659 (RMT) serves as a coordination point for 2-oxoglutarate. Position 2663-2665 (2663-2665 (YQH)) interacts with substrate. His2673 is a Zn(2+) binding site. The interval 2729–2860 (KESSANGQQL…HQQLPQQQQT (132 aa)) is disordered. The span at 2732-2742 (SANGQQLKNGA) shows a compositional bias: polar residues. Positions 2750-2768 (SSDSKKSQANEQSKNEKVA) are enriched in basic and acidic residues. Composition is skewed to low complexity over residues 2772 to 2785 (PTLTTTSWTTLFPT) and 2798 to 2821 (NSSPTSSTNNAPNGGGCPAQQQQH). Positions 2822 to 2849 (LPPPPGSGLIHPPPGTPTGTAAPPPLPT) are enriched in pro residues. A compositionally biased stretch (low complexity) spans 2850-2860 (PHQQLPQQQQT).

Belongs to the TET family. As to quaternary structure, interacts (via C-terminus) with wds (via WD repeats). The cofactor is Fe(2+). Requires Zn(2+) as cofactor. As to expression, expressed in brain (at protein level).

It is found in the chromosome. The enzyme catalyses an N(6)-methyl-2'-deoxyadenosine in DNA + 2-oxoglutarate + O2 = a 2'-deoxyadenosine in DNA + formaldehyde + succinate + CO2. It catalyses the reaction a 5-methyl-2'-deoxycytidine in DNA + 2-oxoglutarate + O2 = a 5-hydroxymethyl-2'-deoxycytidine in DNA + succinate + CO2. The catalysed reaction is a 5-hydroxymethyl-2'-deoxycytidine in DNA + 2-oxoglutarate + O2 = a 5-formyl-2'-deoxycytidine in DNA + succinate + CO2 + H2O. It carries out the reaction a 5-formyl-2'-deoxycytidine in DNA + 2-oxoglutarate + O2 = a 5-carboxyl-2'-deoxycytidine in DNA + succinate + CO2 + H(+). Functionally, dioxygenase that specifically demethylates DNA methylated on the 6th position of adenine (N(6)-methyladenosine) DNA. N(6)-methyladenosine (m6A) DNA is present at a relatively high level at the very earliest embryonic stages but at low levels at the late embryonic stages and may act as a regulator of gene expression. Promotes differentiation of early germ cells in ovary. Contributes to neuronal morphology, development, and function in the brain. By interacting with histone modifier wds, binds to a specific set of genes, modulates intragenic (N(6)-methyladenosine) DNA levels and thereby maintains transcriptional activation. Also able to catalyze the conversion of the modified genomic base 5-methylcytosine (5mC) into 5-hydroxymethylcytosine (5hmC). This Drosophila melanogaster (Fruit fly) protein is Methylcytosine dioxygenase TET.